A 178-amino-acid polypeptide reads, in one-letter code: Endothelin-2 (178 aa).

An N-terminal signal peptide occupies residues 1–26 (MVAMPTAWCSIALALLLALHEGKGQV). Positions 27-46 (AAAPDQPAPSHRARASHLRP) are excised as a propeptide. Disulfide bonds link cysteine 49/cysteine 63 and cysteine 51/cysteine 59. A propeptide spanning residues 70–178 (VNTPGQTAPY…RPTHSRRWKR (109 aa)) is cleaved from the precursor. An endothelin-like region spans residues 96–111 (CECSSGRDPACATFCH).

The protein belongs to the endothelin/sarafotoxin family.

It is found in the secreted. Functionally, endothelins are endothelium-derived vasoconstrictor peptides. The polypeptide is Endothelin-2 (EDN2) (Felis catus (Cat)).